The primary structure comprises 324 residues: Heat-inducible transcription repressor HrcA (324 aa).

This sequence belongs to the HrcA family.

Negative regulator of class I heat shock genes (grpE-dnaK-dnaJ and groELS operons). Prevents heat-shock induction of these operons. The protein is Heat-inducible transcription repressor HrcA of Parasynechococcus marenigrum (strain WH8102).